A 412-amino-acid chain; its full sequence is Short-chain specific acyl-CoA dehydrogenase, mitochondrial (412 aa).

Residues 1–24 constitute a mitochondrion transit peptide; the sequence is MAATLLARACGLVRGAPWPWGWRR. Thr27 carries the phosphothreonine modification. An N6-acetyllysine; alternate modification is found at Lys51. The residue at position 51 (Lys51) is an N6-succinyllysine; alternate. Lys72 bears the N6-acetyllysine mark. At Lys129 the chain carries N6-acetyllysine; alternate. An N6-succinyllysine; alternate modification is found at Lys129. FAD-binding positions include 152–161 and 185–187; these read FALSEPGNGS and WIT. Ser161 contributes to the substrate binding site. Lys208 carries the post-translational modification N6-acetyllysine. Lys262 carries the post-translational modification N6-acetyllysine; alternate. Lys262 carries the N6-succinyllysine; alternate modification. Residue 269–272 coordinates substrate; the sequence is DTGR. Arg297 serves as a coordination point for FAD. Position 306 is an N6-acetyllysine; alternate (Lys306). Lys306 is subject to N6-succinyllysine; alternate. FAD contacts are provided by residues Gln308 and 365–369; that span reads QILGG. Glu392 functions as the Proton acceptor in the catalytic mechanism. Substrate is bound at residue Gly393. 394-396 lines the FAD pocket; that stretch reads TSE.

This sequence belongs to the acyl-CoA dehydrogenase family. Homotetramer. It depends on FAD as a cofactor.

It localises to the mitochondrion matrix. It carries out the reaction a short-chain 2,3-saturated fatty acyl-CoA + oxidized [electron-transfer flavoprotein] + H(+) = a short-chain (2E)-enoyl-CoA + reduced [electron-transfer flavoprotein]. It catalyses the reaction butanoyl-CoA + oxidized [electron-transfer flavoprotein] + H(+) = (2E)-butenoyl-CoA + reduced [electron-transfer flavoprotein]. The enzyme catalyses pentanoyl-CoA + oxidized [electron-transfer flavoprotein] + H(+) = (2E)-pentenoyl-CoA + reduced [electron-transfer flavoprotein]. The catalysed reaction is hexanoyl-CoA + oxidized [electron-transfer flavoprotein] + H(+) = (2E)-hexenoyl-CoA + reduced [electron-transfer flavoprotein]. Its pathway is lipid metabolism; mitochondrial fatty acid beta-oxidation. Short-chain specific acyl-CoA dehydrogenase is one of the acyl-CoA dehydrogenases that catalyze the first step of mitochondrial fatty acid beta-oxidation, an aerobic process breaking down fatty acids into acetyl-CoA and allowing the production of energy from fats. The first step of fatty acid beta-oxidation consists in the removal of one hydrogen from C-2 and C-3 of the straight-chain fatty acyl-CoA thioester, resulting in the formation of trans-2-enoyl-CoA. Among the different mitochondrial acyl-CoA dehydrogenases, short-chain specific acyl-CoA dehydrogenase acts specifically on acyl-CoAs with saturated 4 to 6 carbons long primary chains. The protein is Short-chain specific acyl-CoA dehydrogenase, mitochondrial (ACADS) of Bos taurus (Bovine).